The following is a 134-amino-acid chain: Profilin-3 (134 aa).

C13 and C118 are disulfide-bonded. The short motif at 84–100 (AVIRGKKGSGGITIKKT) is the Involved in PIP2 interaction element. The residue at position 114 (T114) is a Phosphothreonine.

Belongs to the profilin family. In terms of assembly, occurs in many kinds of cells as a complex with monomeric actin in a 1:1 ratio. In terms of processing, phosphorylated by MAP kinases.

It is found in the cytoplasm. The protein resides in the cytoskeleton. Its function is as follows. Binds to actin and affects the structure of the cytoskeleton. At high concentrations, profilin prevents the polymerization of actin, whereas it enhances it at low concentrations. In Olea europaea (Common olive), this protein is Profilin-3.